A 73-amino-acid chain; its full sequence is Potassium channel toxin alpha-KTx 27.1 (73 aa).

The first 23 residues, 1–23, serve as a signal peptide directing secretion; it reads MKFLFLTLFVCCFIAVLVIPSEA.

Belongs to the short scorpion toxin superfamily. Potassium channel inhibitor family. Alpha-KTx 27 subfamily. Post-translationally, contains 4 disulfide bonds. As to expression, expressed by the venom gland.

Its subcellular location is the secreted. This chain is Potassium channel toxin alpha-KTx 27.1, found in Buthus israelis (Israeli scorpion).